A 513-amino-acid chain; its full sequence is ATP synthase subunit alpha (513 aa).

Residue 169-176 (GDRQIGKT) coordinates ATP.

Belongs to the ATPase alpha/beta chains family. As to quaternary structure, F-type ATPases have 2 components, CF(1) - the catalytic core - and CF(0) - the membrane proton channel. CF(1) has five subunits: alpha(3), beta(3), gamma(1), delta(1), epsilon(1). CF(0) has three main subunits: a(1), b(2) and c(9-12). The alpha and beta chains form an alternating ring which encloses part of the gamma chain. CF(1) is attached to CF(0) by a central stalk formed by the gamma and epsilon chains, while a peripheral stalk is formed by the delta and b chains.

The protein resides in the cell inner membrane. The catalysed reaction is ATP + H2O + 4 H(+)(in) = ADP + phosphate + 5 H(+)(out). In terms of biological role, produces ATP from ADP in the presence of a proton gradient across the membrane. The alpha chain is a regulatory subunit. In Francisella tularensis subsp. novicida (strain U112), this protein is ATP synthase subunit alpha.